A 67-amino-acid chain; its full sequence is UPF0337 protein Atu4724 (67 aa).

This sequence belongs to the UPF0337 (CsbD) family.

The polypeptide is UPF0337 protein Atu4724 (Agrobacterium fabrum (strain C58 / ATCC 33970) (Agrobacterium tumefaciens (strain C58))).